Here is a 103-residue protein sequence, read N- to C-terminus: Small ribosomal subunit protein uS10 (103 aa).

Belongs to the universal ribosomal protein uS10 family. Part of the 30S ribosomal subunit.

Its function is as follows. Involved in the binding of tRNA to the ribosomes. This Colwellia psychrerythraea (strain 34H / ATCC BAA-681) (Vibrio psychroerythus) protein is Small ribosomal subunit protein uS10.